A 310-amino-acid polypeptide reads, in one-letter code: Sporozoite surface protein P36 (310 aa).

The first 24 residues, 1 to 24, serve as a signal peptide directing secretion; the sequence is MRKALYSLLFYMCICLYIYTPVFM. 2 consecutive 6-Cys domains span residues 25-157 and 168-309; these read ANLK…IKKT and YIKG…STKA. Intrachain disulfides connect C38/C48, C62/C137, C80/C135, C172/C196, C210/C291, and C227/C289. N-linked (GlcNAc...) asparagine glycosylation is found at N72, N114, and N118. Residue N290 is glycosylated (N-linked (GlcNAc...) asparagine).

The protein resides in the cell surface. Its subcellular location is the cell membrane. Involved in sporozoite infection of hepatocytes and replication therein. In Plasmodium yoelii yoelii, this protein is Sporozoite surface protein P36 (P36).